The chain runs to 207 residues: Uracil phosphoribosyltransferase (207 aa).

5-phospho-alpha-D-ribose 1-diphosphate contacts are provided by residues arginine 77, arginine 102, and 129 to 137 (DPMLATGGS). Residues isoleucine 192 and 197–199 (GDA) each bind uracil. Aspartate 198 contacts 5-phospho-alpha-D-ribose 1-diphosphate.

Belongs to the UPRTase family. Mg(2+) serves as cofactor.

The enzyme catalyses UMP + diphosphate = 5-phospho-alpha-D-ribose 1-diphosphate + uracil. The protein operates within pyrimidine metabolism; UMP biosynthesis via salvage pathway; UMP from uracil: step 1/1. Allosterically activated by GTP. Functionally, catalyzes the conversion of uracil and 5-phospho-alpha-D-ribose 1-diphosphate (PRPP) to UMP and diphosphate. The sequence is that of Uracil phosphoribosyltransferase from Nocardia farcinica (strain IFM 10152).